We begin with the raw amino-acid sequence, 259 residues long: 1,2-dihydroxy-1,2-dihydronaphthalene dehydrogenase (259 aa).

8 to 32 provides a ligand contact to NAD(+); the sequence is SITGAGSGIGLELVRSFKSAGYYVS. Substrate is bound at residue S140. Catalysis depends on Y153, which acts as the Proton acceptor.

The protein belongs to the short-chain dehydrogenases/reductases (SDR) family.

It carries out the reaction (1R,2S)-1,2-dihydronaphthalene-1,2-diol + NAD(+) = naphthalene-1,2-diol + NADH + H(+). The enzyme catalyses cis-1,2-dihydroxy-1,2-dihydrodibenzothiophene + NAD(+) = 1,2-dihydroxydibenzothiophene + NADH + H(+). The protein operates within aromatic compound metabolism; naphthalene degradation. In terms of biological role, catalyzes the oxidation of naphthalene dihydrodiol into 1,2-dihydroxynaphthalene. The polypeptide is 1,2-dihydroxy-1,2-dihydronaphthalene dehydrogenase (doxE) (Pseudomonas sp. (strain C18)).